Reading from the N-terminus, the 588-residue chain is ATP-dependent lipid A-core flippase (588 aa).

6 consecutive transmembrane segments (helical) span residues Phe-23 to Gly-43, Phe-56 to Thr-76, Asp-141 to Met-161, Val-162 to Val-182, Leu-257 to Ile-277, and Thr-278 to Met-298. The region spanning Leu-28–Arg-310 is the ABC transmembrane type-1 domain. Positions Ile-342–Val-576 constitute an ABC transporter domain. Gly-375–Thr-382 serves as a coordination point for ATP.

It belongs to the ABC transporter superfamily. Lipid exporter (TC 3.A.1.106) family. Homodimer.

It localises to the cell inner membrane. It catalyses the reaction ATP + H2O + lipid A-core oligosaccharideSide 1 = ADP + phosphate + lipid A-core oligosaccharideSide 2.. Functionally, involved in lipopolysaccharide (LPS) biosynthesis. Translocates lipid A-core from the inner to the outer leaflet of the inner membrane. Transmembrane domains (TMD) form a pore in the inner membrane and the ATP-binding domain (NBD) is responsible for energy generation. This Legionella pneumophila subsp. pneumophila (strain Philadelphia 1 / ATCC 33152 / DSM 7513) protein is ATP-dependent lipid A-core flippase.